Reading from the N-terminus, the 107-residue chain is Thioredoxin-1 (107 aa).

Residues 2–106 (ASVRTMTDFH…LTNMMAKLVK (105 aa)) enclose the Thioredoxin domain. Catalysis depends on nucleophile residues Cys31 and Cys34. Cys31 and Cys34 form a disulfide bridge.

It belongs to the thioredoxin family.

It localises to the nucleus. Its function is as follows. Participates in various redox reactions through the reversible oxidation of its active center dithiol to a disulfide and catalyzes dithiol-disulfide exchange reactions. As a reducing substrate of peroxiredoxin 1, thioredoxin 2 is preferred over thioredoxin 1. Required for female meiosis and early embryonic development. The protein is Thioredoxin-1 (dhd) of Drosophila yakuba (Fruit fly).